The sequence spans 348 residues: Phenylalanine--tRNA ligase alpha subunit (348 aa).

Position 259 (glutamate 259) interacts with Mg(2+).

Belongs to the class-II aminoacyl-tRNA synthetase family. Phe-tRNA synthetase alpha subunit type 1 subfamily. In terms of assembly, tetramer of two alpha and two beta subunits. Mg(2+) is required as a cofactor.

The protein localises to the cytoplasm. It catalyses the reaction tRNA(Phe) + L-phenylalanine + ATP = L-phenylalanyl-tRNA(Phe) + AMP + diphosphate + H(+). This Latilactobacillus sakei subsp. sakei (strain 23K) (Lactobacillus sakei subsp. sakei) protein is Phenylalanine--tRNA ligase alpha subunit.